The following is a 463-amino-acid chain: Quinolone resistance protein NorB (463 aa).

The next 14 helical transmembrane spans lie at 17–37 (IGIVLSVITFWLFAQSLVNVV), 53–73 (IAVSITALFSGMFVVGAGGLA), 86–106 (IILNILGSLLIIISNIPLLLI), 107–127 (IGRLIQGLSAACIMPATLSII), 142–162 (YWSIGSWGGSGVCSFFGGAVA), 165–185 (LGWRWIFILSIIISLIALFLI), 201–221 (FDIKGLVLLVIMLLSLNILIT), 230–250 (SLLFITILAIAIVSFSLFIVL), 273–293 (TASNFLLNGVAGTLIVANTFV), 299–319 (YSSLQAGSLSITYLVMVLIMI), 334–354 (PMLIGTAVLIVGECLISLTFL), 357–377 (ILYVICCIIGYLFFGLGLGIY), 403–423 (MASALGGAFGVALSGAVYAIV), and 435–455 (IALWLNAGMGILSFVIILLLV).

This sequence belongs to the major facilitator superfamily. TCR/Tet family.

It localises to the cell membrane. In terms of biological role, multidrug efflux pump that acts independently of NorA and is one of the factors that confers resistance against diverse quinolones and chemical compounds. The polypeptide is Quinolone resistance protein NorB (norB) (Staphylococcus aureus (strain MRSA252)).